The following is an 84-amino-acid chain: Small ribosomal subunit protein bS18 (84 aa).

This sequence belongs to the bacterial ribosomal protein bS18 family. As to quaternary structure, part of the 30S ribosomal subunit. Forms a tight heterodimer with protein bS6.

Binds as a heterodimer with protein bS6 to the central domain of the 16S rRNA, where it helps stabilize the platform of the 30S subunit. This is Small ribosomal subunit protein bS18 from Helicobacter hepaticus (strain ATCC 51449 / 3B1).